The primary structure comprises 467 residues: Zinc finger protein mex-6 (467 aa).

Composition is skewed to low complexity over residues 1–22 and 179–195; these read MTATSNSAPLAGGSLSSSATAQ and STTRTVPLTSSTPLPTS. Disordered regions lie at residues 1 to 35 and 163 to 209; these read MTATSNSAPLAGGSLSSSATAQPPQPPPGHQQQHP and TNPQ…NRNS. Threonine 190 is subject to Phosphothreonine. The segment covering 196–207 has biased composition (basic and acidic residues); sequence REYETVQRDRNR. C3H1-type zinc fingers lie at residues 273 to 302 and 317 to 347; these read NFKTRLCMTHAAGINPCALGARCKFAHGLK and KYKTKLCKNFARGGSGVCPYGLRCEFVHPSD. Residues 425–451 form a disordered region; the sequence is INENDLPPHLRRIRRGNPPVTRSRPSF. Serine 457 carries the post-translational modification Phosphoserine.

As to quaternary structure, interacts (probably when phosphorylated on Thr-190) with plk-1 (via POLO box domain) and plk-2 (via POLO box domain). Post-translationally, phosphorylation on Ser-457 by par-1 promotes localization of the protein to the anterior cytoplasm of the zygote.

It localises to the cytoplasm. Functionally, functions with mex-5 to affect embryonic viability, establish soma germline asymmetry in embryos and establish plk-1, pie-1, mex-1, and pos-1 asymmetry in embryos. Also affects formation of intestinal cells. The protein is Zinc finger protein mex-6 (mex-6) of Caenorhabditis elegans.